We begin with the raw amino-acid sequence, 316 residues long: tRNA dimethylallyltransferase (316 aa).

G17 to T24 is an ATP binding site. T19–T24 is a substrate binding site. Interaction with substrate tRNA regions lie at residues D42–L45, Q166–R170, and R247–R252.

The protein belongs to the IPP transferase family. Monomer. Mg(2+) serves as cofactor.

The catalysed reaction is adenosine(37) in tRNA + dimethylallyl diphosphate = N(6)-dimethylallyladenosine(37) in tRNA + diphosphate. Its function is as follows. Catalyzes the transfer of a dimethylallyl group onto the adenine at position 37 in tRNAs that read codons beginning with uridine, leading to the formation of N6-(dimethylallyl)adenosine (i(6)A). The protein is tRNA dimethylallyltransferase of Salmonella enteritidis PT4 (strain P125109).